A 437-amino-acid chain; its full sequence is UDP-N-acetylmuramate--L-alanine ligase (437 aa).

Residue 108 to 114 (GAHGKTS) coordinates ATP.

It belongs to the MurCDEF family.

It is found in the cytoplasm. The catalysed reaction is UDP-N-acetyl-alpha-D-muramate + L-alanine + ATP = UDP-N-acetyl-alpha-D-muramoyl-L-alanine + ADP + phosphate + H(+). It participates in cell wall biogenesis; peptidoglycan biosynthesis. Its function is as follows. Cell wall formation. This Staphylococcus carnosus (strain TM300) protein is UDP-N-acetylmuramate--L-alanine ligase.